A 104-amino-acid chain; its full sequence is Viral histone-like protein (104 aa).

It belongs to the bacterial histone-like protein family. As to quaternary structure, homodimer.

Its subcellular location is the virion. With respect to regulation, stilbene derivatives SD1 and SD4 disrupt the binding between pA104R and DNA and inhibit the viral replication in primary alveolar macrophages. In terms of biological role, DNA-binding protein that plays a critical role in nucleoid compaction, genome replication and DNA replication and transcription. Binds to both ssDNA and dsDNA with a binding site covering about 15 nucleotides. Displays DNA-supercoiling activity only when associated with the viral DNA topoisomerase 2. In African swine fever virus (strain Badajoz 1971 Vero-adapted) (Ba71V), this protein is Viral histone-like protein.